The chain runs to 682 residues: Tail-specific protease (682 aa).

A signal peptide spans 1-22; it reads MNTFFRLTALAGLLALAGQSFA. The PDZ domain occupies 238-322; sequence NTEMSLSLEG…SKVRLEILPA (85 aa). Residues Ser-452, Asp-463, and Lys-477 each act as charge relay system in the active site.

The protein belongs to the peptidase S41A family.

It localises to the cell inner membrane. It catalyses the reaction The enzyme shows specific recognition of a C-terminal tripeptide, Xaa-Yaa-Zaa, in which Xaa is preferably Ala or Leu, Yaa is preferably Ala or Tyr, and Zaa is preferably Ala, but then cleaves at a variable distance from the C-terminus. A typical cleavage is -Ala-Ala-|-Arg-Ala-Ala-Lys-Glu-Asn-Tyr-Ala-Leu-Ala-Ala.. Functionally, involved in the cleavage of a C-terminal peptide of 11 residues from the precursor form of penicillin-binding protein 3 (PBP3). May be involved in protection of the bacterium from thermal and osmotic stresses. The polypeptide is Tail-specific protease (prc) (Salmonella typhimurium (strain LT2 / SGSC1412 / ATCC 700720)).